Reading from the N-terminus, the 550-residue chain is MAAKDVKFGNDARIKMLRGVNILADAVKVTLGPKGRNVVLDKSFGSPTITKDGVSVAREIELEDKFENMGAQMVKEVASKANDAAGDGTTTATVLAQSIITEGLKAVAAGMNPMDLKRGIDKAVIAAVEELKKLSVPCSDSKAIAQVGTISANSDSTVGELIAQAMEKVGKEGVITVEEGSGLQDELDVVEGMQFDRGYLSPYFINKPETGSIELESPFILLADKKISNIREMLPVLEAVAKAGKPLLIIAEDVEGEALATLVVNTMRGIVKVAAVKAPGFGDRRKAMLQDIATLTAGTVISEEIGLELEKTTLEDLGQAKRVVINKDTTIIIDGVGDEAAIQGRVAQIRQQIEDATSDYDKEKLQERVAKLAGGVAVIKVGAATEVEMKEKKARVEDALHATRAAVEEGVVAGGGVALIRAASAITAAGLKGDNEDQNVGIKVALRAMESPLRQIVVNAGEEASVIANNVKAGSGSYGYNAYSEEYGDMIAMGILDPTKVTRSALQYAASIAGLMITTECMITDLPRDDKGADMGAGGMGGMGGMGGMM.

ATP contacts are provided by residues 30–33, K51, 87–91, G415, and D497; these read TLGP and DGTTT.

The protein belongs to the chaperonin (HSP60) family. As to quaternary structure, forms a cylinder of 14 subunits composed of two heptameric rings stacked back-to-back. Interacts with the co-chaperonin GroES.

The protein localises to the cytoplasm. It carries out the reaction ATP + H2O + a folded polypeptide = ADP + phosphate + an unfolded polypeptide.. Functionally, together with its co-chaperonin GroES, plays an essential role in assisting protein folding. The GroEL-GroES system forms a nano-cage that allows encapsulation of the non-native substrate proteins and provides a physical environment optimized to promote and accelerate protein folding. This is Chaperonin GroEL from Yersinia enterocolitica serotype O:8 / biotype 1B (strain NCTC 13174 / 8081).